We begin with the raw amino-acid sequence, 531 residues long: Glucose-6-phosphate exchanger SLC37A1 (531 aa).

A helical transmembrane segment spans residues 18–38; that stretch reads QWYRAFIFMLTFLLYASFHLS. The disordered stretch occupies residues 53–72; the sequence is CTAGDGPESPFSDPSSSTRH. 11 helical membrane-spanning segments follow: residues 100-120, 129-149, 157-177, 192-214, 222-242, 332-352, 364-384, 392-412, 419-439, 464-484, and 488-508; these read GALD…SGII, YLTF…LGYF, FYVV…PSVV, IMGI…AGYW, SFIV…LFLI, LCLL…PLYI, GELS…AGVI, ASTC…FSSV, ATIA…ALIT, AIID…AGLI, and GWSN…LFLV.

It belongs to the major facilitator superfamily. Organophosphate:Pi antiporter (OPA) (TC 2.A.1.4) family.

It localises to the endoplasmic reticulum membrane. The enzyme catalyses D-glucose 6-phosphate(in) + phosphate(out) = D-glucose 6-phosphate(out) + phosphate(in). Inhibited by vanadate but not by chlorogenic acid. Its function is as follows. Inorganic phosphate and glucose-6-phosphate antiporter. May transport cytoplasmic glucose-6-phosphate into the lumen of the endoplasmic reticulum and translocate inorganic phosphate into the opposite direction. Independent of a lumenal glucose-6-phosphatase. May not play a role in homeostatic regulation of blood glucose levels. In Mus musculus (Mouse), this protein is Glucose-6-phosphate exchanger SLC37A1.